Consider the following 124-residue polypeptide: UPF0102 protein MSMEG_2508/MSMEI_2448 (124 aa).

It belongs to the UPF0102 family.

In Mycolicibacterium smegmatis (strain ATCC 700084 / mc(2)155) (Mycobacterium smegmatis), this protein is UPF0102 protein MSMEG_2508/MSMEI_2448.